Reading from the N-terminus, the 303-residue chain is Deoxyhypusine hydroxylase (303 aa).

Residue methionine 1 is modified to N-acetylmethionine. 6 HEAT-like PBS-type repeats span residues 23–49 (ARFR…AFDD), 54–80 (LKHE…VLRD), 87–113 (VRHE…YSTD), 175–201 (DRYR…GLRC), 206–232 (FRHE…ALAQ), and 239–265 (VRHE…HVAD). 3 residues coordinate Fe cation: histidine 56, histidine 89, and glutamate 90. Fe cation is bound by residues histidine 208, histidine 241, and glutamate 242.

It belongs to the deoxyhypusine hydroxylase family. Fe(2+) is required as a cofactor.

It carries out the reaction [eIF5A protein]-deoxyhypusine + AH2 + O2 = [eIF5A protein]-hypusine + A + H2O. It participates in protein modification; eIF5A hypusination. Catalyzes the hydroxylation of the N(6)-(4-aminobutyl)-L-lysine intermediate produced by deoxyhypusine synthase/DHPS on a critical lysine of the eukaryotic translation initiation factor 5A/eIF-5A. This is the second step of the post-translational modification of that lysine into an unusual amino acid residue named hypusine. Hypusination is unique to mature eIF-5A factor and is essential for its function. The polypeptide is Deoxyhypusine hydroxylase (Bos taurus (Bovine)).